Here is a 629-residue protein sequence, read N- to C-terminus: Ionotropic receptor 75a (629 aa).

Topologically, residues 1–335 are extracellular; it reads MQLVQLANFV…GDVFLQPFSP (335 aa). N-linked (GlcNAc...) asparagine glycosylation is found at Asn61, Asn112, Asn126, Asn144, Asn166, and Asn232. A helical transmembrane segment spans residues 336 to 356; it reads LVWYLFGGVLSLIGVLLWITF. Over 357-374 the chain is Cytoplasmic; it reads YMECKRMQKRWRLDYLPS. A helical transmembrane segment spans residues 375 to 395; the sequence is LLSTFLISFGAACIQSSSLIP. At 396 to 402 the chain is on the extracellular side; that stretch reads RSAGGRL. A helical membrane pass occupies residues 403–423; sequence IYFALFLISFIMYNYYTSVVV. At 424-592 the chain is on the cytoplasmic side; that stretch reads SSLLSSPVKS…NFVITVGMEY (169 aa). Residues 593–613 form a helical membrane-spanning segment; the sequence is VAPLLLMLICADILVVVILLV. Over 614–629 the chain is Extracellular; it reads ELAWKRFFTRHLTFHP.

This sequence belongs to the glutamate-gated ion channel (TC 1.A.10.1) family. In terms of tissue distribution, expressed in acetic-acid-sensing neurons in the antennal coeloconic 2 (ac2) and antennal coeloconic 3 (ac3) sensilla class of sensory hairs (at protein level).

The protein localises to the cell membrane. The protein resides in the cell projection. Its subcellular location is the dendrite. Its function is as follows. Odorant receptor for acetic and propionic acid. Functions as part of an olfactory receptor complex including the ionotropic receptor coreceptor Ir8a. The sequence is that of Ionotropic receptor 75a from Drosophila melanogaster (Fruit fly).